The following is a 165-amino-acid chain: Small ribosomal subunit protein uS5 (165 aa).

One can recognise an S5 DRBM domain in the interval 13 to 76; the sequence is LEENVVSINR…EDAKRHLIKV (64 aa).

The protein belongs to the universal ribosomal protein uS5 family. Part of the 30S ribosomal subunit. Contacts proteins S4 and S8.

With S4 and S12 plays an important role in translational accuracy. Its function is as follows. Located at the back of the 30S subunit body where it stabilizes the conformation of the head with respect to the body. This is Small ribosomal subunit protein uS5 from Oenococcus oeni (strain ATCC BAA-331 / PSU-1).